The primary structure comprises 184 residues: Endoribonuclease YbeY (184 aa).

Residues His-118, His-122, and His-128 each contribute to the Zn(2+) site. The tract at residues 156 to 184 (YHQDRQSQKDQRLLDKSRYFDELNHGDTP) is disordered. A compositionally biased stretch (basic and acidic residues) spans 157–184 (HQDRQSQKDQRLLDKSRYFDELNHGDTP).

Belongs to the endoribonuclease YbeY family. Zn(2+) serves as cofactor.

Its subcellular location is the cytoplasm. In terms of biological role, single strand-specific metallo-endoribonuclease involved in late-stage 70S ribosome quality control and in maturation of the 3' terminus of the 16S rRNA. This Mycolicibacterium vanbaalenii (strain DSM 7251 / JCM 13017 / BCRC 16820 / KCTC 9966 / NRRL B-24157 / PYR-1) (Mycobacterium vanbaalenii) protein is Endoribonuclease YbeY.